Reading from the N-terminus, the 382-residue chain is ATP phosphoribosyltransferase regulatory subunit (382 aa).

It belongs to the class-II aminoacyl-tRNA synthetase family. HisZ subfamily. In terms of assembly, heteromultimer composed of HisG and HisZ subunits.

The protein resides in the cytoplasm. The protein operates within amino-acid biosynthesis; L-histidine biosynthesis; L-histidine from 5-phospho-alpha-D-ribose 1-diphosphate: step 1/9. Functionally, required for the first step of histidine biosynthesis. May allow the feedback regulation of ATP phosphoribosyltransferase activity by histidine. The chain is ATP phosphoribosyltransferase regulatory subunit from Burkholderia pseudomallei (strain 1106a).